Consider the following 347-residue polypeptide: 3-isopropylmalate dehydrogenase (347 aa).

An NAD(+)-binding site is contributed by 76–87 (GPKWTDPNNRPE). The substrate site is built by Arg94, Arg104, Arg132, and Asp217. 3 residues coordinate Mg(2+): Asp217, Asp241, and Asp245. 275 to 287 (GSAPDIANEDKAN) lines the NAD(+) pocket.

It belongs to the isocitrate and isopropylmalate dehydrogenases family. LeuB type 1 subfamily. In terms of assembly, homodimer. It depends on Mg(2+) as a cofactor. Mn(2+) serves as cofactor.

It is found in the cytoplasm. The catalysed reaction is (2R,3S)-3-isopropylmalate + NAD(+) = 4-methyl-2-oxopentanoate + CO2 + NADH. It participates in amino-acid biosynthesis; L-leucine biosynthesis; L-leucine from 3-methyl-2-oxobutanoate: step 3/4. Its function is as follows. Catalyzes the oxidation of 3-carboxy-2-hydroxy-4-methylpentanoate (3-isopropylmalate) to 3-carboxy-4-methyl-2-oxopentanoate. The product decarboxylates to 4-methyl-2 oxopentanoate. The sequence is that of 3-isopropylmalate dehydrogenase from Staphylococcus epidermidis (strain ATCC 35984 / DSM 28319 / BCRC 17069 / CCUG 31568 / BM 3577 / RP62A).